Consider the following 358-residue polypeptide: Glutamine synthetase (358 aa).

A GS beta-grasp domain is found at 26–105 (ILAEYIWIDG…VLAECWNADG (80 aa)). The GS catalytic domain occupies 112–358 (HRHECAKIME…IMMETICGGI (247 aa)).

Belongs to the glutamine synthetase family. Homooctamer.

It is found in the cytoplasm. It catalyses the reaction L-glutamate + NH4(+) + ATP = L-glutamine + ADP + phosphate + H(+). This chain is Glutamine synthetase (GLN1), found in Tuber borchii (White truffle).